We begin with the raw amino-acid sequence, 96 residues long: Protein RnfH (96 aa).

Belongs to the UPF0125 (RnfH) family.

This chain is Protein RnfH, found in Salmonella agona (strain SL483).